The chain runs to 206 residues: Proteasome subunit beta 1 (206 aa).

Residues 1-14 (MSRIHNDPKVLLTG) constitute a propeptide, removed in mature form; by autocatalysis. Catalysis depends on T15, which acts as the Nucleophile.

It belongs to the peptidase T1B family. As to quaternary structure, the 20S proteasome core is composed of 14 alpha and 14 beta subunits that assemble into four stacked heptameric rings, resulting in a barrel-shaped structure. The two inner rings, each composed of seven catalytic beta subunits, are sandwiched by two outer rings, each composed of seven alpha subunits. The catalytic chamber with the active sites is on the inside of the barrel. Has a gated structure, the ends of the cylinder being occluded by the N-termini of the alpha-subunits. Is capped at one or both ends by the proteasome regulatory ATPase, PAN.

It is found in the cytoplasm. The enzyme catalyses Cleavage of peptide bonds with very broad specificity.. With respect to regulation, the formation of the proteasomal ATPase PAN-20S proteasome complex, via the docking of the C-termini of PAN into the intersubunit pockets in the alpha-rings, triggers opening of the gate for substrate entry. Interconversion between the open-gate and close-gate conformations leads to a dynamic regulation of the 20S proteasome proteolysis activity. Functionally, component of the proteasome core, a large protease complex with broad specificity involved in protein degradation. The polypeptide is Proteasome subunit beta 1 (Caldivirga maquilingensis (strain ATCC 700844 / DSM 13496 / JCM 10307 / IC-167)).